The chain runs to 311 residues: Aspartate carbamoyltransferase catalytic subunit (311 aa).

The carbamoyl phosphate site is built by Arg55 and Thr56. Residue Lys85 coordinates L-aspartate. 3 residues coordinate carbamoyl phosphate: Arg106, His135, and Gln138. 2 residues coordinate L-aspartate: Arg168 and Arg230. Residues Leu268 and Pro269 each contribute to the carbamoyl phosphate site.

Belongs to the aspartate/ornithine carbamoyltransferase superfamily. ATCase family. Heterododecamer (2C3:3R2) of six catalytic PyrB chains organized as two trimers (C3), and six regulatory PyrI chains organized as three dimers (R2).

The catalysed reaction is carbamoyl phosphate + L-aspartate = N-carbamoyl-L-aspartate + phosphate + H(+). Its pathway is pyrimidine metabolism; UMP biosynthesis via de novo pathway; (S)-dihydroorotate from bicarbonate: step 2/3. Catalyzes the condensation of carbamoyl phosphate and aspartate to form carbamoyl aspartate and inorganic phosphate, the committed step in the de novo pyrimidine nucleotide biosynthesis pathway. This is Aspartate carbamoyltransferase catalytic subunit from Yersinia pseudotuberculosis serotype IB (strain PB1/+).